Here is a 396-residue protein sequence, read N- to C-terminus: Penicillopepsin-1 (396 aa).

The signal sequence occupies residues 1 to 20 (MVVFSKVTASLACFSAVVSA). The propeptide at 21 to 72 (AAVPVKSPRQGFSVNQVQKTVTGTRTVNLPGVYANALAKYGATVPANVHAAA) is activation peptide. Residues 88 to 393 (YLTPVKIGES…DAEGPRLGFA (306 aa)) enclose the Peptidase A1 domain. Catalysis depends on residues Asp104 and Asp285. An N-linked (GlcNAc...) asparagine glycan is attached at Asn311. Cys321 and Cys356 are oxidised to a cystine.

It belongs to the peptidase A1 family. As to quaternary structure, monomer.

The protein resides in the secreted. It carries out the reaction Hydrolysis of proteins with broad specificity similar to that of pepsin A, preferring hydrophobic residues at P1 and P1', but also cleaving 20-Gly-|-Glu-21 in the B chain of insulin. Clots milk, and activates trypsinogen.. In terms of biological role, secreted aspartic endopeptidase that allows assimilation of proteinaceous substrates. The scissile peptide bond is attacked by a nucleophilic water molecule activated by two aspartic residues in the active site. Shows a broad primary substrate specificity. Favors hydrophobic residues at the P1 and P1' positions, but can also activate trypsinogen and hydrolyze the B chain of insulin between positions 'Gly-20' and 'Glu-21'. The polypeptide is Penicillopepsin-1 (pepA) (Penicillium rubens (strain ATCC 28089 / DSM 1075 / NRRL 1951 / Wisconsin 54-1255) (Penicillium chrysogenum)).